A 112-amino-acid chain; its full sequence is Protein ORF3 (112 aa).

2 hydrophobic regions span residues 7–23 (ALGLFCFCSSCFCLCCP) and 40–60 (AAVVSGVTGLILSPSPSPIFI). The interval 28-66 (VSRLAVAAGKRGAAVVSGVTGLILSPSPSPIFIQPTPSH) is interaction with host HPX. The interval 70 to 112 (QPPPGLELALGSQSVHSAPLGVTSPSAPPLPPVVDLPQLGLRR) is homodimerization, and interaction with host AMBP/bikunin. Residues 89–112 (LGVTSPSAPPLPPVVDLPQLGLRR) form a disordered region. Residues 93–102 (SPSAPPLPPV) form an interaction with host SRC, HCK, FYN, PIK3R3 and GRB2 region. Residues 94–97 (PSAP) carry the PTAP/PSAP motif motif.

This sequence belongs to the hepevirus ORF3 protein family. As to quaternary structure, forms homooligomers. Interacts with host SRC, HCK, FYN, PIK3R3 and GRB2 (via SH3 domain); binding does not activate the kinases. Interacts with host AMBP/bikunin and AMBP/alpha-1-microglobulin peptides. Interacts with host HPX/hemopexin. Interacts (when phosphorylated) with capsid protein ORF2. Interacts with host TSG101; this interaction plays a role in viral release from the host cell. Interacts with host SIRPA; this interaction down-regulates the phosphorylation of host IRF3. Palmitoylated in the N-terminus.

The protein resides in the host endoplasmic reticulum membrane. Its subcellular location is the host cytoplasm. It localises to the host cytoskeleton. The protein localises to the virion. It is found in the host cell membrane. Small multifunctional phosphoprotein involved in virion morphogenesis, egress and counteracting host innate immunity. Plays critical roles in the final steps of viral release by interacting with host TSG101, a member of the vacuolar protein-sorting pathway and using other cellular host proteins involved in vesicle formation pathway. Also acts as a viroporin and forms ion conductive pores allowing viral particle release. Impairs the generation of type I interferon by down-regulating host TLR3 and TLR7 as well as their downstream signaling pathways. Down-regulates the phosphorylation of host IRF3 via the interaction with host SIRP-alpha, thereby inhibiting IFN-I expression. Interacts with host microtubules. The sequence is that of Protein ORF3 from Bandicota bengalensis (lesser bandicoot rat).